The primary structure comprises 94 residues: Pyrimidine/purine nucleoside phosphorylase (94 aa).

The protein belongs to the nucleoside phosphorylase PpnP family.

The enzyme catalyses a purine D-ribonucleoside + phosphate = a purine nucleobase + alpha-D-ribose 1-phosphate. It catalyses the reaction adenosine + phosphate = alpha-D-ribose 1-phosphate + adenine. The catalysed reaction is cytidine + phosphate = cytosine + alpha-D-ribose 1-phosphate. It carries out the reaction guanosine + phosphate = alpha-D-ribose 1-phosphate + guanine. The enzyme catalyses inosine + phosphate = alpha-D-ribose 1-phosphate + hypoxanthine. It catalyses the reaction thymidine + phosphate = 2-deoxy-alpha-D-ribose 1-phosphate + thymine. The catalysed reaction is uridine + phosphate = alpha-D-ribose 1-phosphate + uracil. It carries out the reaction xanthosine + phosphate = alpha-D-ribose 1-phosphate + xanthine. In terms of biological role, catalyzes the phosphorolysis of diverse nucleosides, yielding D-ribose 1-phosphate and the respective free bases. Can use uridine, adenosine, guanosine, cytidine, thymidine, inosine and xanthosine as substrates. Also catalyzes the reverse reactions. This chain is Pyrimidine/purine nucleoside phosphorylase, found in Salmonella paratyphi C (strain RKS4594).